The following is a 430-amino-acid chain: MHATVSPSRVRGRARAPPSKSYTHRALLAAGYADGETVVRDPLVSADTRATARAVELLGGAAARENGDWVVTGFGSRPAIPDAVIDCANSGTTMRLVTAAAALADGTTVLTGDESLRARPHGPLLDALSGLGGTARSTRGNGQAPLVVDGPVSGGSVALPGDVSSQFVTALLMAGAVTETGIETDLTTELKSAPYVDITLDVLDAFGVGASETAAGYRVRGGQAYAPSGAEYAVPGDFSSASYLLAAGALAAADGAAVVVEGMHPSAQGDAAIVDVLERMGADIDWDTESGVITVQRSELSGVEVGVADTPDLLPTIAVLGAAADGTTRITDAEHVRYKETDRVAAMAESLSKLGASVEERPDELVVRGGDTELSGASVDGRGDHRLVMALAVAGLVADGETTIAGSEHVDVSFPDFFEVLAGLGADTDG.

The disordered stretch occupies residues 1 to 20; the sequence is MHATVSPSRVRGRARAPPSK. The 3-phosphoshikimate site is built by K20, S21, and R25. A phosphoenolpyruvate-binding site is contributed by K20. Phosphoenolpyruvate-binding residues include G91 and R119. The 3-phosphoshikimate site is built by S164, S165, Q166, S192, D312, and K339. Q166 contributes to the phosphoenolpyruvate binding site. D312 (proton acceptor) is an active-site residue. Phosphoenolpyruvate-binding residues include R343 and R386.

This sequence belongs to the EPSP synthase family. In terms of assembly, monomer.

It localises to the cytoplasm. It carries out the reaction 3-phosphoshikimate + phosphoenolpyruvate = 5-O-(1-carboxyvinyl)-3-phosphoshikimate + phosphate. The protein operates within metabolic intermediate biosynthesis; chorismate biosynthesis. Its function is as follows. Catalyzes the transfer of the enolpyruvyl moiety of phosphoenolpyruvate (PEP) to the 5-hydroxyl of shikimate-3-phosphate (S3P) to produce enolpyruvyl shikimate-3-phosphate and inorganic phosphate. The chain is 3-phosphoshikimate 1-carboxyvinyltransferase from Halobacterium salinarum (strain ATCC 29341 / DSM 671 / R1).